A 191-amino-acid polypeptide reads, in one-letter code: Putative 3-methyladenine DNA glycosylase (191 aa).

The protein belongs to the DNA glycosylase MPG family.

This chain is Putative 3-methyladenine DNA glycosylase, found in Carboxydothermus hydrogenoformans (strain ATCC BAA-161 / DSM 6008 / Z-2901).